A 183-amino-acid polypeptide reads, in one-letter code: Dual-action ribosomal maturation protein DarP (183 aa).

This sequence belongs to the DarP family.

Its subcellular location is the cytoplasm. Member of a network of 50S ribosomal subunit biogenesis factors which assembles along the 30S-50S interface, preventing incorrect 23S rRNA structures from forming. Promotes peptidyl transferase center (PTC) maturation. The polypeptide is Dual-action ribosomal maturation protein DarP (Shigella flexneri).